A 371-amino-acid chain; its full sequence is Aldose sugar dehydrogenase YliI (371 aa).

A signal peptide spans 1 to 20 (MHRQSFFLVPLICLSSALWA). Glutamine 82 provides a ligand contact to pyrroloquinoline quinone. Residue histidine 147 is the Proton acceptor of the active site. The PQQ stretch occupies residues 214–215 (RN). Ca(2+) is bound by residues glutamate 240 and tyrosine 250. Tyrosine 261 lines the pyrroloquinoline quinone pocket. PQQ regions lie at residues 312 to 314 (ALK) and 341 to 343 (RIR).

This sequence belongs to the PQQ oxidoreductase GdhB family. In terms of assembly, monomer. Requires Ca(2+) as cofactor. Pyrroloquinoline quinone serves as cofactor.

It localises to the cell outer membrane. Aldose sugar dehydrogenase with broad substrate specificity. The physiological substrate is unknown. Can oxidize glucose to gluconolactone. Can also utilize D-arabinose, L-arabinose and 2-deoxy-glucose. Has higher activity towards oligomeric sugars, such as maltose, maltotriose or cellobiose. It may function to input sugar-derived electrons into the respiratory network. The sequence is that of Aldose sugar dehydrogenase YliI (yliI) from Escherichia coli (strain K12).